Reading from the N-terminus, the 347-residue chain is 5-deoxyribose 1-phosphate isomerase (347 aa).

Residues 48 to 50, R91, and Q198 contribute to the substrate site; that span reads RGA. D239 functions as the Proton donor in the catalytic mechanism. Position 249–250 (249–250) interacts with substrate; that stretch reads NK.

The protein belongs to the EIF-2B alpha/beta/delta subunits family. DrdI subfamily.

The catalysed reaction is 5-deoxy-alpha-D-ribose 1-phosphate = 5-deoxy-D-ribulose 1-phosphate. It functions in the pathway carbohydrate degradation. Functionally, catalyzes the isomerization of 5-deoxy-alpha-D-ribose 1-phosphate to 5-deoxy-D-ribulose 1-phosphate, as part of a 5-deoxyribose salvage pathway that recycles this toxic radical SAM enzyme by-product to mainstream metabolites. In Bacillus thuringiensis (strain Al Hakam), this protein is 5-deoxyribose 1-phosphate isomerase.